We begin with the raw amino-acid sequence, 99 residues long: HssA/B-like protein 42 (99 aa).

The interval methionine 1–serine 29 is disordered.

Belongs to the hssA/B family.

This Dictyostelium discoideum (Social amoeba) protein is HssA/B-like protein 42 (hssl42).